A 718-amino-acid polypeptide reads, in one-letter code: DNA ligase (718 aa).

NAD(+) contacts are provided by residues 34–38 (DAEYD), 83–84 (SL), and Glu-115. The active-site N6-AMP-lysine intermediate is Lys-117. NAD(+) contacts are provided by Arg-138, Glu-186, Lys-302, and Lys-326. Zn(2+)-binding residues include Cys-420, Cys-423, Cys-438, and Cys-444. The 91-residue stretch at 604–694 (PKGDALAGKT…DRSAPAASNN (91 aa)) folds into the BRCT domain.

It belongs to the NAD-dependent DNA ligase family. LigA subfamily. Mg(2+) is required as a cofactor. It depends on Mn(2+) as a cofactor.

The enzyme catalyses NAD(+) + (deoxyribonucleotide)n-3'-hydroxyl + 5'-phospho-(deoxyribonucleotide)m = (deoxyribonucleotide)n+m + AMP + beta-nicotinamide D-nucleotide.. Functionally, DNA ligase that catalyzes the formation of phosphodiester linkages between 5'-phosphoryl and 3'-hydroxyl groups in double-stranded DNA using NAD as a coenzyme and as the energy source for the reaction. It is essential for DNA replication and repair of damaged DNA. This chain is DNA ligase, found in Roseiflexus castenholzii (strain DSM 13941 / HLO8).